The following is a 762-amino-acid chain: 5-methyltetrahydropteroyltriglutamate--homocysteine methyltransferase (762 aa).

5-methyltetrahydropteroyltri-L-glutamate is bound by residues 17–20 (REWK) and lysine 111. Residues 435–437 (IGS) and glutamate 488 each bind L-homocysteine. L-methionine contacts are provided by residues 435 to 437 (IGS) and glutamate 488. 5-methyltetrahydropteroyltri-L-glutamate contacts are provided by residues 519–520 (RC) and tryptophan 565. An L-homocysteine-binding site is contributed by aspartate 603. Aspartate 603 is a binding site for L-methionine. Glutamate 609 is a 5-methyltetrahydropteroyltri-L-glutamate binding site. Zn(2+) is bound by residues histidine 645, cysteine 647, and glutamate 669. The active-site Proton donor is histidine 698. Position 730 (cysteine 730) interacts with Zn(2+).

The protein belongs to the vitamin-B12 independent methionine synthase family. Requires Zn(2+) as cofactor.

It catalyses the reaction 5-methyltetrahydropteroyltri-L-glutamate + L-homocysteine = tetrahydropteroyltri-L-glutamate + L-methionine. It participates in amino-acid biosynthesis; L-methionine biosynthesis via de novo pathway; L-methionine from L-homocysteine (MetE route): step 1/1. Catalyzes the transfer of a methyl group from 5-methyltetrahydrofolate to homocysteine resulting in methionine formation. This is 5-methyltetrahydropteroyltriglutamate--homocysteine methyltransferase from Bacillus mycoides (strain KBAB4) (Bacillus weihenstephanensis).